Reading from the N-terminus, the 771-residue chain is Kinase suppressor of Ras A (771 aa).

Residues 152-169 (SRTSSGSTDEPSGQSTPA) show a composition bias toward polar residues. Positions 152-172 (SRTSSGSTDEPSGQSTPAIVT) are disordered. The segment at 215–269 (PHKWHRSTKFRFSGDAVCHFCQRPLGFGFLNAWEKCRSCKWKVHTQCKGRVGDSC) adopts a Phorbol-ester/DAG-type zinc-finger fold. Disordered regions lie at residues 290 to 339 (GMWK…ISGN) and 414 to 433 (DSTG…EAVD). Over residues 318–331 (SSSSTNSSAPSTPA) the composition is skewed to low complexity. The region spanning 477–748 (DKQAPIIGRG…TDINLKLTAL (272 aa)) is the Protein kinase domain. ATP is bound by residues 483–491 (IGRGRFGKV) and Lys503. Asp600 serves as the catalytic Proton acceptor.

This sequence belongs to the protein kinase superfamily. TKL Ser/Thr protein kinase family. In terms of assembly, interacts with mek-2. The cofactor is Mg(2+).

The catalysed reaction is L-seryl-[protein] + ATP = O-phospho-L-seryl-[protein] + ADP + H(+). It carries out the reaction L-threonyl-[protein] + ATP = O-phospho-L-threonyl-[protein] + ADP + H(+). Its function is as follows. Serine/threonine-protein kinase which positively regulates Ras-mediated signaling probably acting at the level of let-60/ras or/and lin-45/raf. Involved in sex myoblast migration. Plays a role in responses to M.nematophilum-mediated bacterial infection by promoting tail swelling and preventing constipation. Functions redundantly with ksr-2 in the Ras-mediated regulation of larval survival, the development of excretory canal and in mpk-1 phosphorylation in somatic cells. In addition, involved in determining vulval precursor cell fate during vulval induction independently of its kinase activity. Plays a role in egg-laying. This is Kinase suppressor of Ras A from Caenorhabditis elegans.